We begin with the raw amino-acid sequence, 474 residues long: Cysteine--tRNA ligase (474 aa).

Residue C34 coordinates Zn(2+). Residues P36–N46 carry the 'HIGH' region motif. 3 residues coordinate Zn(2+): C219, H244, and E248. The 'KMSKS' region motif lies at K276–S280. K279 serves as a coordination point for ATP.

Belongs to the class-I aminoacyl-tRNA synthetase family. As to quaternary structure, monomer. Zn(2+) is required as a cofactor.

The protein localises to the cytoplasm. It carries out the reaction tRNA(Cys) + L-cysteine + ATP = L-cysteinyl-tRNA(Cys) + AMP + diphosphate. The protein is Cysteine--tRNA ligase (cysS) of Chlamydia pneumoniae (Chlamydophila pneumoniae).